We begin with the raw amino-acid sequence, 549 residues long: Membrane protein insertase YidC (549 aa).

A helical transmembrane segment spans residues 9–29; sequence LRLILAIALSFLFIALYSYFF. Positions 37–51 are enriched in low complexity; that stretch reads TETTKQETTNNHTAT. A disordered region spans residues 37-56; the sequence is TETTKQETTNNHTATSPTAS. Helical transmembrane passes span 328 to 348, 351 to 371, 417 to 437, 452 to 472, and 498 to 518; these read VIEYGLITFFAKGVFVLLDYL, FVGNWGWAIILLTIIVRIILY, GANPLGGCLPLILQIPVFFAI, WVLWIHDLSIMDPYFILPLLM, and LLPLLFTIFLITFPAGLVLYW.

The protein belongs to the OXA1/ALB3/YidC family. Type 1 subfamily. As to quaternary structure, interacts with the Sec translocase complex via SecD. Specifically interacts with transmembrane segments of nascent integral membrane proteins during membrane integration.

It is found in the cell inner membrane. Required for the insertion and/or proper folding and/or complex formation of integral membrane proteins into the membrane. Involved in integration of membrane proteins that insert both dependently and independently of the Sec translocase complex, as well as at least some lipoproteins. Aids folding of multispanning membrane proteins. This Helicobacter pylori (strain J99 / ATCC 700824) (Campylobacter pylori J99) protein is Membrane protein insertase YidC.